The primary structure comprises 122 residues: Small ribosomal subunit protein uS13 (122 aa).

The interval 94–122 (KKLPVRGQRTHTNARTRKGPAKPIAGKKK) is disordered.

This sequence belongs to the universal ribosomal protein uS13 family. In terms of assembly, part of the 30S ribosomal subunit. Forms a loose heterodimer with protein S19. Forms two bridges to the 50S subunit in the 70S ribosome.

Located at the top of the head of the 30S subunit, it contacts several helices of the 16S rRNA. In the 70S ribosome it contacts the 23S rRNA (bridge B1a) and protein L5 of the 50S subunit (bridge B1b), connecting the 2 subunits; these bridges are implicated in subunit movement. Contacts the tRNAs in the A and P-sites. The polypeptide is Small ribosomal subunit protein uS13 (Hyphomonas neptunium (strain ATCC 15444)).